The following is a 200-amino-acid chain: WASH complex subunit 3 (200 aa).

Positions 56-76 (SLRIQQIETTLSILEAKLASI) form a coiled coil. Disordered stretches follow at residues 87–130 (VRAP…AENI) and 165–200 (DPNL…SFSD).

This sequence belongs to the CCDC53 family. Component of the WASH complex.

The sequence is that of WASH complex subunit 3 from Danio rerio (Zebrafish).